A 688-amino-acid polypeptide reads, in one-letter code: NADH-ubiquinone oxidoreductase 75 kDa subunit (688 aa).

The 85-residue stretch at 1–85 (MLIRFKINEI…DESIETEIDE (85 aa)) folds into the 2Fe-2S ferredoxin-type domain. [2Fe-2S] cluster contacts are provided by cysteine 38, cysteine 49, cysteine 52, and cysteine 66. A 4Fe-4S His(Cys)3-ligated-type domain is found at 85–124 (EILKAREGVMEFLLINHPLDCPICDQGGECDLQEQTIAYG). Histidine 101, cysteine 105, cysteine 108, cysteine 114, cysteine 153, cysteine 156, cysteine 159, and cysteine 204 together coordinate [4Fe-4S] cluster. The 4Fe-4S Mo/W bis-MGD-type domain maps to 223-279 (LKNIKGIDIFDTVLTPINYQVKGGEIFRILPRINDRLNEEWITDKVRFHYESYKIIE).

This sequence belongs to the complex I 75 kDa subunit family. As to quaternary structure, complex I is composed of about 45 different subunits. Requires [2Fe-2S] cluster as cofactor. The cofactor is [4Fe-4S] cluster.

Its subcellular location is the mitochondrion inner membrane. It carries out the reaction a ubiquinone + NADH + 5 H(+)(in) = a ubiquinol + NAD(+) + 4 H(+)(out). Core subunit of the mitochondrial membrane respiratory chain NADH dehydrogenase (Complex I) that is believed to belong to the minimal assembly required for catalysis. Complex I functions in the transfer of electrons from NADH to the respiratory chain. The immediate electron acceptor for the enzyme is believed to be ubiquinone. This is the largest subunit of complex I and it is a component of the iron-sulfur (IP) fragment of the enzyme. It may form part of the active site crevice where NADH is oxidized. This Dictyostelium citrinum (Slime mold) protein is NADH-ubiquinone oxidoreductase 75 kDa subunit (nad11).